We begin with the raw amino-acid sequence, 501 residues long: Endosomal/lysosomal proton channel TMEM175 (501 aa).

The interval 1–20 (MAAPRAATPGPGGGARKPEL) is disordered. The Cytoplasmic segment spans residues 1–31 (MAAPRAATPGPGGGARKPELDLELGSSTQTS). Residues 32–54 (HRLLAYSDALLSIIATVMILPVA) traverse the membrane as a helical segment. The RxxxFSD motif 1 motif lies at 33-39 (RLLAYSD). At 55–75 (HTKIHPDQKLGESVQQLLLTK) the chain is on the lumenal side. A short helix H1-1 region spans residues 56-61 (TKIHPD). The tract at residues 63-69 (KLGESVQ) is short helix H2-1. Residues 76 to 98 (IAVYLMTFLIVTVAWAAHVRLFQ) traverse the membrane as a helical segment. The Cytoplasmic segment spans residues 99 to 104 (VIELID). Residues 105–126 (DVLALLNLACMMIITFLPYTFS) form a helical membrane-spanning segment. Residues 127–136 (LMASFPGVPF) lie on the Lumenal side of the membrane. The chain crosses the membrane as a helical span at residues 137–158 (GIFLFSVCAVVIGLIQAVIVVY). At 159-182 (GFYHPHLLNQQIQVSENQNFYKRH) the chain is on the cytoplasmic side. The chain crosses the membrane as a helical span at residues 183–203 (ILKIILRGPALCFLAAIFSFF). The Lumenal portion of the chain corresponds to 204 to 208 (FIPLS). A helical transmembrane segment spans residues 209–228 (YLLLGLVIVFPHLSRFITWC). The Cytoplasmic portion of the chain corresponds to 229-257 (KTKIVGHRDEEEASYSLETFSFYLSEPLS). The helical transmembrane segment at 258–282 (KERVEAFSDGVYAIVATLLILDICE) threads the bilayer. The RxxxFSD motif 2 motif lies at 260–266 (RVEAFSD). The Lumenal portion of the chain corresponds to 283 to 309 (DNVPDPREVGEKFHGSLLEALSEYGPN). A short helix H1-2 region spans residues 288–296 (PREVGEKFH). Positions 298-304 (SLLEALS) are short helix H2-2. The chain crosses the membrane as a helical span at residues 310-332 (YLAYFGSFVTIGLLWFVHHSLFL). The Cytoplasmic portion of the chain corresponds to 333 to 338 (YVTKAT). The chain crosses the membrane as a helical span at residues 339 to 360 (RLMGLLNILSLAFIGGLPLAYQ). The Lumenal segment spans residues 361-375 (LTSEFAEKSHNEIEA). The helical transmembrane segment at 376–396 (IQVSCVITFFASIFQFAIWTT) threads the bilayer. At 397 to 416 (ALLHERETLHPFARYGGKEH) the chain is on the cytoplasmic side. A helical membrane pass occupies residues 417–440 (AFMFAKLALYPCVSLGAFFLTCLL). The Lumenal segment spans residues 441 to 442 (SE). A helical membrane pass occupies residues 443-469 (FSTEIFHLMQIVIPFAFLALRIFVRIS). The Cytoplasmic portion of the chain corresponds to 470 to 501 (LTVIKSVMSLSRRKVVLLEEEEACLSPTETHS).

Belongs to the TMEM175 family. As to quaternary structure, homodimer.

Its subcellular location is the endosome membrane. It is found in the lysosome membrane. It catalyses the reaction H(+)(in) = H(+)(out). The catalysed reaction is K(+)(in) = K(+)(out). With respect to regulation, active at low pH (under pH 4.6): proton channel activity is activated by luminal side protons. Polyunsaturated fatty acids, such as arachidonic acid, also activate the channel activity. Functionally, proton-activated proton channel that catalyzes proton efflux from endosomes and lysosomes to maintain a steady-state pH. Activated at low pH (under pH 4.6) by luminal side protons: selectively mediates lysosomal proton release from lysosomes, eliciting a proton leak that balances V-ATPase activity to maintain pH homeostasis. Regulation of lumenal pH stability is required for autophagosome-lysosome fusion. Also acts as a potassium channel at higher pH, regulating potassium conductance in endosomes and lysosomes. The sequence is that of Endosomal/lysosomal proton channel TMEM175 from Gallus gallus (Chicken).